Consider the following 305-residue polypeptide: Heterogeneous nuclear ribonucleoprotein A0 (305 aa).

The residue at position 1 (Met1) is an N-acetylmethionine. One can recognise an RRM 1 domain in the interval 7-86 (CKLFIGGLNV…VELKRAVSRE (80 aa)). Position 68 is a phosphoserine (Ser68). Residue Lys80 forms a Glycyl lysine isopeptide (Lys-Gly) (interchain with G-Cter in SUMO2) linkage. Ser84 carries the phosphoserine; by MAPKAPK2 modification. Glycyl lysine isopeptide (Lys-Gly) (interchain with G-Cter in SUMO2) cross-links involve residues Lys96, Lys98, Lys99, and Lys106. Positions 98 to 175 (KKLFVGGLKG…HRVEVKKAVP (78 aa)) constitute an RRM 2 domain. Position 133 is an N6-acetyllysine (Lys133). Arg139 carries the post-translational modification Omega-N-methylarginine. Residues Lys154, Lys159, Lys172, and Lys176 each participate in a glycyl lysine isopeptide (Lys-Gly) (interchain with G-Cter in SUMO2) cross-link. Disordered stretches follow at residues 174-214 (VPKE…KGGG) and 262-305 (QSSY…GSSF). Gly residues-rich tracts occupy residues 181–200 (SGGG…GRGR) and 269–281 (KSGG…GSSW). Phosphoserine is present on Ser188. Arg284 carries the post-translational modification Omega-N-methylarginine. A compositionally biased stretch (gly residues) spans 290–305 (YRGGYGGGGGYGGSSF). Arg291 bears the Asymmetric dimethylarginine; alternate mark. The residue at position 291 (Arg291) is a Dimethylated arginine; alternate. Arg291 bears the Omega-N-methylarginine; alternate mark.

Post-translationally, phosphorylated at Ser-84 by MAPKAPK2 in response to LPS treatment, promoting stabilization of GADD45A mRNA. In terms of processing, arg-291 is dimethylated, probably to asymmetric dimethylarginine.

The protein localises to the nucleus. Its function is as follows. mRNA-binding component of ribonucleosomes. Specifically binds AU-rich element (ARE)-containing mRNAs. Involved in post-transcriptional regulation of cytokines mRNAs. The polypeptide is Heterogeneous nuclear ribonucleoprotein A0 (HNRNPA0) (Homo sapiens (Human)).